Reading from the N-terminus, the 298-residue chain is Acetylglutamate kinase (298 aa).

Substrate contacts are provided by residues 66 to 67, Arg-88, and Asn-193; that span reads GG.

It belongs to the acetylglutamate kinase family. ArgB subfamily.

The protein localises to the cytoplasm. The catalysed reaction is N-acetyl-L-glutamate + ATP = N-acetyl-L-glutamyl 5-phosphate + ADP. The protein operates within amino-acid biosynthesis; L-arginine biosynthesis; N(2)-acetyl-L-ornithine from L-glutamate: step 2/4. Its function is as follows. Catalyzes the ATP-dependent phosphorylation of N-acetyl-L-glutamate. This chain is Acetylglutamate kinase, found in Methanosphaera stadtmanae (strain ATCC 43021 / DSM 3091 / JCM 11832 / MCB-3).